The sequence spans 590 residues: Arginine--tRNA ligase (590 aa).

A 'HIGH' region motif is present at residues 130 to 140 (PNIAKEMHVGH).

Belongs to the class-I aminoacyl-tRNA synthetase family. Monomer.

Its subcellular location is the cytoplasm. It catalyses the reaction tRNA(Arg) + L-arginine + ATP = L-arginyl-tRNA(Arg) + AMP + diphosphate. The polypeptide is Arginine--tRNA ligase (Synechococcus sp. (strain CC9605)).